The primary structure comprises 120 residues: Flagellar protein FliT (120 aa).

Positions 1–50 are required for homodimerization; it reads MNDSSLSLKKWHALSALSNTMLSLAQSGKWDELIEQEVAYVSLVEKISIT. Residues 59–97 form a fliD binding region; it reads IQDQAMVMLNNVLQNEMTLKTLLQERMDELHGLMAQTGK.

The protein belongs to the FliT family. In terms of assembly, homodimer. Interacts with FliD and FlhC.

The protein resides in the cytoplasm. The protein localises to the cytosol. Functionally, dual-function protein that regulates the transcription of class 2 flagellar operons and that also acts as an export chaperone for the filament-capping protein FliD. As a transcriptional regulator, acts as an anti-FlhDC factor; it directly binds FlhC, thus inhibiting the binding of the FlhC/FlhD complex to class 2 promoters, resulting in decreased expression of class 2 flagellar operons. As a chaperone, effects FliD transition to the membrane by preventing its premature polymerization, and by directing it to the export apparatus. The protein is Flagellar protein FliT of Enterobacter sp. (strain 638).